A 498-amino-acid chain; its full sequence is Glycerol kinase (498 aa).

Residue T12 coordinates ADP. Positions 12, 13, and 14 each coordinate ATP. T12 is a sn-glycerol 3-phosphate binding site. Residue R16 participates in ADP binding. Sn-glycerol 3-phosphate is bound by residues R82, E83, Y134, and D243. Glycerol contacts are provided by R82, E83, Y134, D243, and Q244. T265 and G308 together coordinate ADP. Positions 265, 308, 312, and 409 each coordinate ATP. Residues G409 and N413 each contribute to the ADP site.

Belongs to the FGGY kinase family. In terms of assembly, homotetramer and homodimer (in equilibrium).

The enzyme catalyses glycerol + ATP = sn-glycerol 3-phosphate + ADP + H(+). The protein operates within polyol metabolism; glycerol degradation via glycerol kinase pathway; sn-glycerol 3-phosphate from glycerol: step 1/1. With respect to regulation, activated by phosphorylation and inhibited by fructose 1,6-bisphosphate (FBP). Its function is as follows. Key enzyme in the regulation of glycerol uptake and metabolism. Catalyzes the phosphorylation of glycerol to yield sn-glycerol 3-phosphate. This chain is Glycerol kinase, found in Agathobacter rectalis (strain ATCC 33656 / DSM 3377 / JCM 17463 / KCTC 5835 / VPI 0990) (Eubacterium rectale).